The chain runs to 202 residues: Small ribosomal subunit protein uS4c (202 aa).

Residues 90-150 enclose the S4 RNA-binding domain; sequence MRLDNVIFRL…NQRKSQAIIN (61 aa).

It belongs to the universal ribosomal protein uS4 family. In terms of assembly, part of the 30S ribosomal subunit. Contacts protein S5. The interaction surface between S4 and S5 is involved in control of translational fidelity.

It is found in the plastid. The protein localises to the chloroplast. In terms of biological role, one of the primary rRNA binding proteins, it binds directly to 16S rRNA where it nucleates assembly of the body of the 30S subunit. Functionally, with S5 and S12 plays an important role in translational accuracy. This chain is Small ribosomal subunit protein uS4c (rps4), found in Canalohypopterygium tamariscinum (Moss).